Reading from the N-terminus, the 210-residue chain is ATP-dependent Clp protease proteolytic subunit (210 aa).

Ser107 serves as the catalytic Nucleophile. His132 is a catalytic residue.

It belongs to the peptidase S14 family. Fourteen ClpP subunits assemble into 2 heptameric rings which stack back to back to give a disk-like structure with a central cavity, resembling the structure of eukaryotic proteasomes.

It is found in the cytoplasm. The catalysed reaction is Hydrolysis of proteins to small peptides in the presence of ATP and magnesium. alpha-casein is the usual test substrate. In the absence of ATP, only oligopeptides shorter than five residues are hydrolyzed (such as succinyl-Leu-Tyr-|-NHMec, and Leu-Tyr-Leu-|-Tyr-Trp, in which cleavage of the -Tyr-|-Leu- and -Tyr-|-Trp bonds also occurs).. Functionally, cleaves peptides in various proteins in a process that requires ATP hydrolysis. Has a chymotrypsin-like activity. Plays a major role in the degradation of misfolded proteins. In Cereibacter sphaeroides (strain ATCC 17025 / ATH 2.4.3) (Rhodobacter sphaeroides), this protein is ATP-dependent Clp protease proteolytic subunit.